Reading from the N-terminus, the 385-residue chain is Probable peptidoglycan glycosyltransferase FtsW (385 aa).

Transmembrane regions (helical) follow at residues 18 to 38, 57 to 77, 81 to 101, 111 to 131, 157 to 177, 195 to 215, 280 to 300, 311 to 331, and 347 to 367; these read LLWTAILLALAGLVMVSSASL, IYLALGLGVGAFVYYAVPLAL, LRFVMLPVALVALVMVFIPGL, WIALPGLTIQASEIVKLCFVL, LLGVLMLLLLLEPDFGAVVVL, FLLIGLIAVALGGLVAFAEPY, LGLLGNVALIGGFILLGWRVF, LLYHAYLVYGCAFVFCSQAFI, and LPFISYGGSSLLISAVMVGLI.

The protein belongs to the SEDS family. FtsW subfamily.

It is found in the cell inner membrane. The enzyme catalyses [GlcNAc-(1-&gt;4)-Mur2Ac(oyl-L-Ala-gamma-D-Glu-L-Lys-D-Ala-D-Ala)](n)-di-trans,octa-cis-undecaprenyl diphosphate + beta-D-GlcNAc-(1-&gt;4)-Mur2Ac(oyl-L-Ala-gamma-D-Glu-L-Lys-D-Ala-D-Ala)-di-trans,octa-cis-undecaprenyl diphosphate = [GlcNAc-(1-&gt;4)-Mur2Ac(oyl-L-Ala-gamma-D-Glu-L-Lys-D-Ala-D-Ala)](n+1)-di-trans,octa-cis-undecaprenyl diphosphate + di-trans,octa-cis-undecaprenyl diphosphate + H(+). It functions in the pathway cell wall biogenesis; peptidoglycan biosynthesis. In terms of biological role, peptidoglycan polymerase that is essential for cell division. The chain is Probable peptidoglycan glycosyltransferase FtsW from Alcanivorax borkumensis (strain ATCC 700651 / DSM 11573 / NCIMB 13689 / SK2).